The primary structure comprises 208 residues: Guanylate kinase (208 aa).

In terms of domain architecture, Guanylate kinase-like spans 4–185 (GNLYILSAPS…ALADLVHILR (182 aa)). Residue 11–18 (APSGAGKS) participates in ATP binding.

This sequence belongs to the guanylate kinase family.

The protein localises to the cytoplasm. It carries out the reaction GMP + ATP = GDP + ADP. Its function is as follows. Essential for recycling GMP and indirectly, cGMP. In Mannheimia succiniciproducens (strain KCTC 0769BP / MBEL55E), this protein is Guanylate kinase.